We begin with the raw amino-acid sequence, 287 residues long: Orotidine 5'-phosphate decarboxylase (287 aa).

Catalysis depends on Lys97, which acts as the Proton donor.

It belongs to the OMP decarboxylase family. Type 2 subfamily.

The enzyme catalyses orotidine 5'-phosphate + H(+) = UMP + CO2. It functions in the pathway pyrimidine metabolism; UMP biosynthesis via de novo pathway; UMP from orotate: step 2/2. The chain is Orotidine 5'-phosphate decarboxylase (pyrF) from Clostridium perfringens (strain 13 / Type A).